The primary structure comprises 1364 residues: DNA-directed RNA polymerase subunit beta (1364 aa).

Belongs to the RNA polymerase beta chain family. In terms of assembly, the RNAP catalytic core consists of 2 alpha, 1 beta, 1 beta' and 1 omega subunit. When a sigma factor is associated with the core the holoenzyme is formed, which can initiate transcription.

It catalyses the reaction RNA(n) + a ribonucleoside 5'-triphosphate = RNA(n+1) + diphosphate. DNA-dependent RNA polymerase catalyzes the transcription of DNA into RNA using the four ribonucleoside triphosphates as substrates. The sequence is that of DNA-directed RNA polymerase subunit beta from Desulfatibacillum aliphaticivorans.